Consider the following 329-residue polypeptide: 4-hydroxythreonine-4-phosphate dehydrogenase (329 aa).

Residues histidine 136 and threonine 137 each contribute to the substrate site. 3 residues coordinate a divalent metal cation: histidine 166, histidine 211, and histidine 266. 3 residues coordinate substrate: lysine 274, asparagine 283, and arginine 292.

The protein belongs to the PdxA family. As to quaternary structure, homodimer. Requires Zn(2+) as cofactor. Mg(2+) serves as cofactor. The cofactor is Co(2+).

The protein localises to the cytoplasm. It carries out the reaction 4-(phosphooxy)-L-threonine + NAD(+) = 3-amino-2-oxopropyl phosphate + CO2 + NADH. The protein operates within cofactor biosynthesis; pyridoxine 5'-phosphate biosynthesis; pyridoxine 5'-phosphate from D-erythrose 4-phosphate: step 4/5. In terms of biological role, catalyzes the NAD(P)-dependent oxidation of 4-(phosphooxy)-L-threonine (HTP) into 2-amino-3-oxo-4-(phosphooxy)butyric acid which spontaneously decarboxylates to form 3-amino-2-oxopropyl phosphate (AHAP). In Escherichia coli O17:K52:H18 (strain UMN026 / ExPEC), this protein is 4-hydroxythreonine-4-phosphate dehydrogenase.